A 272-amino-acid polypeptide reads, in one-letter code: Shikimate dehydrogenase (NADP(+)) (272 aa).

Residues 14–16 (SKS) and Thr-61 contribute to the shikimate site. The active-site Proton acceptor is the Lys-65. Glu-77 contributes to the NADP(+) binding site. Asn-86 and Asp-102 together coordinate shikimate. Residues 126-130 (GAGGA), 149-154 (NRTVSR), and Met-213 contribute to the NADP(+) site. Residue Tyr-215 coordinates shikimate. Gly-237 contacts NADP(+).

Belongs to the shikimate dehydrogenase family. In terms of assembly, homodimer.

The catalysed reaction is shikimate + NADP(+) = 3-dehydroshikimate + NADPH + H(+). The protein operates within metabolic intermediate biosynthesis; chorismate biosynthesis; chorismate from D-erythrose 4-phosphate and phosphoenolpyruvate: step 4/7. Its function is as follows. Involved in the biosynthesis of the chorismate, which leads to the biosynthesis of aromatic amino acids. Catalyzes the reversible NADPH linked reduction of 3-dehydroshikimate (DHSA) to yield shikimate (SA). This chain is Shikimate dehydrogenase (NADP(+)), found in Shigella flexneri.